A 124-amino-acid chain; its full sequence is Small ribosomal subunit protein uS12 (124 aa).

The residue at position 89 (Asp-89) is a 3-methylthioaspartic acid. Residues 104–124 (ALGVEDRKRGRSKYGAKRPKA) form a disordered region. Basic residues predominate over residues 112 to 124 (RGRSKYGAKRPKA).

This sequence belongs to the universal ribosomal protein uS12 family. In terms of assembly, part of the 30S ribosomal subunit. Contacts proteins S8 and S17. May interact with IF1 in the 30S initiation complex.

Its function is as follows. With S4 and S5 plays an important role in translational accuracy. In terms of biological role, interacts with and stabilizes bases of the 16S rRNA that are involved in tRNA selection in the A site and with the mRNA backbone. Located at the interface of the 30S and 50S subunits, it traverses the body of the 30S subunit contacting proteins on the other side and probably holding the rRNA structure together. The combined cluster of proteins S8, S12 and S17 appears to hold together the shoulder and platform of the 30S subunit. This Treponema denticola (strain ATCC 35405 / DSM 14222 / CIP 103919 / JCM 8153 / KCTC 15104) protein is Small ribosomal subunit protein uS12.